A 450-amino-acid chain; its full sequence is 3-phosphoshikimate 1-carboxyvinyltransferase (450 aa).

Positions 28, 29, and 33 each coordinate 3-phosphoshikimate. Lys-28 lines the phosphoenolpyruvate pocket. The phosphoenolpyruvate site is built by Gly-100 and Arg-128. Positions 173, 175, 326, and 353 each coordinate 3-phosphoshikimate. A phosphoenolpyruvate-binding site is contributed by Gln-175. Asp-326 serves as the catalytic Proton acceptor. 2 residues coordinate phosphoenolpyruvate: Arg-357 and Arg-402.

Belongs to the EPSP synthase family. As to quaternary structure, monomer.

It localises to the cytoplasm. The catalysed reaction is 3-phosphoshikimate + phosphoenolpyruvate = 5-O-(1-carboxyvinyl)-3-phosphoshikimate + phosphate. The protein operates within metabolic intermediate biosynthesis; chorismate biosynthesis; chorismate from D-erythrose 4-phosphate and phosphoenolpyruvate: step 6/7. In terms of biological role, catalyzes the transfer of the enolpyruvyl moiety of phosphoenolpyruvate (PEP) to the 5-hydroxyl of shikimate-3-phosphate (S3P) to produce enolpyruvyl shikimate-3-phosphate and inorganic phosphate. The protein is 3-phosphoshikimate 1-carboxyvinyltransferase of Brucella abortus (strain S19).